We begin with the raw amino-acid sequence, 419 residues long: tRNA(Met) cytidine acetate ligase (419 aa).

Residues 7-20 (ITEY…HLHH), Gly101, Asn163, and Arg188 contribute to the ATP site.

This sequence belongs to the TmcAL family.

It localises to the cytoplasm. It carries out the reaction cytidine(34) in elongator tRNA(Met) + acetate + ATP = N(4)-acetylcytidine(34) in elongator tRNA(Met) + AMP + diphosphate. Catalyzes the formation of N(4)-acetylcytidine (ac(4)C) at the wobble position of elongator tRNA(Met), using acetate and ATP as substrates. First activates an acetate ion to form acetyladenylate (Ac-AMP) and then transfers the acetyl group to tRNA to form ac(4)C34. In Syntrophotalea carbinolica (strain DSM 2380 / NBRC 103641 / GraBd1) (Pelobacter carbinolicus), this protein is tRNA(Met) cytidine acetate ligase.